Consider the following 166-residue polypeptide: Ureidoglycolate lyase (166 aa).

It belongs to the ureidoglycolate lyase family. In terms of assembly, homodimer. Requires Ni(2+) as cofactor.

It catalyses the reaction (S)-ureidoglycolate = urea + glyoxylate. It functions in the pathway nitrogen metabolism; (S)-allantoin degradation. Functionally, catalyzes the catabolism of the allantoin degradation intermediate (S)-ureidoglycolate, generating urea and glyoxylate. Involved in the utilization of allantoin as nitrogen source. The polypeptide is Ureidoglycolate lyase (Azotobacter vinelandii (strain DJ / ATCC BAA-1303)).